The chain runs to 219 residues: Deoxyribose-phosphate aldolase 1 (219 aa).

Asp87 (proton donor/acceptor) is an active-site residue. Catalysis depends on Lys149, which acts as the Schiff-base intermediate with acetaldehyde. Catalysis depends on Lys178, which acts as the Proton donor/acceptor.

This sequence belongs to the DeoC/FbaB aldolase family. DeoC type 1 subfamily.

It is found in the cytoplasm. The enzyme catalyses 2-deoxy-D-ribose 5-phosphate = D-glyceraldehyde 3-phosphate + acetaldehyde. Its pathway is carbohydrate degradation; 2-deoxy-D-ribose 1-phosphate degradation; D-glyceraldehyde 3-phosphate and acetaldehyde from 2-deoxy-alpha-D-ribose 1-phosphate: step 2/2. In terms of biological role, catalyzes a reversible aldol reaction between acetaldehyde and D-glyceraldehyde 3-phosphate to generate 2-deoxy-D-ribose 5-phosphate. This Vibrio vulnificus (strain YJ016) protein is Deoxyribose-phosphate aldolase 1.